We begin with the raw amino-acid sequence, 81 residues long: Teretoxin Tsu6.8 (81 aa).

The first 21 residues, 1-21 (MATSGRLLCLCLVLGLIFESL), serve as a signal peptide directing secretion. The propeptide occupies 22–45 (GHPVMGEKRAGENASPSARSLPKR).

Belongs to the teretoxin M (TM) superfamily. Post-translationally, contains 3 disulfide bonds. As to expression, expressed by the venom duct.

It is found in the secreted. This is Teretoxin Tsu6.8 from Terebra subulata (Chocolate spotted auger).